The chain runs to 375 residues: MTSKIQNPNLAALSAAGVSVWLDDLSRDRLQSGNLQKLIDTKSVVGVTTNPSIFQKAFANGHAYDAQIAELAKRGANVDVTVRTVTTDDVRHACDVLACEWEASHGKDGRVSIEVDPRLAHDTDKTIAQAVELWRIVDHPNLFIKIPATKAGLPAITAVLAEGISVNVTLIFSVQRHREVIDAYLAGIEKAAEAGRDLSKIVSVASFFVSRVDTEIDKRLEKLGSEQALALRGQAGVANARLAYAAYQKAFEGGQRYQTLMARGAQVQRPLWASTGVKNPDYADTLYVTELVAPNTVNTMPETTIDAVADHGVIRGDTISGTTLSSQKVFDSLVAVGVDLIDVFAVLEHEGVQKFVKSWNELLKETQEQLDSVAK.

The active-site Schiff-base intermediate with substrate is Lys145.

This sequence belongs to the transaldolase family. Type 2 subfamily.

It localises to the cytoplasm. It catalyses the reaction D-sedoheptulose 7-phosphate + D-glyceraldehyde 3-phosphate = D-erythrose 4-phosphate + beta-D-fructose 6-phosphate. It functions in the pathway carbohydrate degradation; pentose phosphate pathway; D-glyceraldehyde 3-phosphate and beta-D-fructose 6-phosphate from D-ribose 5-phosphate and D-xylulose 5-phosphate (non-oxidative stage): step 2/3. Functionally, transaldolase is important for the balance of metabolites in the pentose-phosphate pathway. This Mycobacterium leprae (strain Br4923) protein is Transaldolase.